Consider the following 199-residue polypeptide: MSSKGPSYRIENIVATVNLGVELDLEQLAERLTMAEYNPDQFPGLILRLTKPRISALIFRTGKMVCTGAKNEEDLKNAVRALVKLLKDHGADVPFDPEVQIQNIVASGNLHAEVDLEQAVLMLENAMYEPEQFPGLIYRMSSPRVVILIFGSGKIVCTGAKSEKDVATAVQKLYNQLKELGVLYVEEGGEELEEFEEEL.

2 tandem repeats follow at residues 10 to 86 (IENI…VKLL) and 101 to 177 (IQNI…YNQL).

This sequence belongs to the TBP family.

In terms of biological role, general factor that plays a role in the activation of archaeal genes transcribed by RNA polymerase. Binds specifically to the TATA box promoter element which lies close to the position of transcription initiation. The chain is TATA-box-binding protein from Pyrobaculum aerophilum (strain ATCC 51768 / DSM 7523 / JCM 9630 / CIP 104966 / NBRC 100827 / IM2).